Reading from the N-terminus, the 213-residue chain is ATP-dependent dethiobiotin synthetase BioD (213 aa).

An ATP-binding site is contributed by 13–18 (GIGKTV). Thr-17 lines the Mg(2+) pocket. Lys-33 is an active-site residue. Position 100 (Glu-100) interacts with Mg(2+). ATP contacts are provided by residues 100–103 (EGAG) and 184–186 (PRL).

Belongs to the dethiobiotin synthetase family. Homodimer. Mg(2+) serves as cofactor.

It is found in the cytoplasm. It carries out the reaction (7R,8S)-7,8-diammoniononanoate + CO2 + ATP = (4R,5S)-dethiobiotin + ADP + phosphate + 3 H(+). The protein operates within cofactor biosynthesis; biotin biosynthesis; biotin from 7,8-diaminononanoate: step 1/2. Catalyzes a mechanistically unusual reaction, the ATP-dependent insertion of CO2 between the N7 and N8 nitrogen atoms of 7,8-diaminopelargonic acid (DAPA, also called 7,8-diammoniononanoate) to form a ureido ring. In Rhodopseudomonas palustris (strain HaA2), this protein is ATP-dependent dethiobiotin synthetase BioD.